The following is a 428-amino-acid chain: 3-phosphoshikimate 1-carboxyvinyltransferase (428 aa).

3-phosphoshikimate contacts are provided by lysine 20, serine 21, and arginine 25. Position 20 (lysine 20) interacts with phosphoenolpyruvate. Phosphoenolpyruvate is bound by residues glycine 92 and arginine 120. The 3-phosphoshikimate site is built by serine 166, glutamine 168, aspartate 314, and lysine 341. Glutamine 168 serves as a coordination point for phosphoenolpyruvate. Aspartate 314 functions as the Proton acceptor in the catalytic mechanism. Phosphoenolpyruvate-binding residues include arginine 345 and arginine 387.

This sequence belongs to the EPSP synthase family. Monomer.

The protein localises to the cytoplasm. It catalyses the reaction 3-phosphoshikimate + phosphoenolpyruvate = 5-O-(1-carboxyvinyl)-3-phosphoshikimate + phosphate. The protein operates within metabolic intermediate biosynthesis; chorismate biosynthesis; chorismate from D-erythrose 4-phosphate and phosphoenolpyruvate: step 6/7. Catalyzes the transfer of the enolpyruvyl moiety of phosphoenolpyruvate (PEP) to the 5-hydroxyl of shikimate-3-phosphate (S3P) to produce enolpyruvyl shikimate-3-phosphate and inorganic phosphate. The chain is 3-phosphoshikimate 1-carboxyvinyltransferase from Listeria welshimeri serovar 6b (strain ATCC 35897 / DSM 20650 / CCUG 15529 / CIP 8149 / NCTC 11857 / SLCC 5334 / V8).